Here is a 118-residue protein sequence, read N- to C-terminus: Small ribosomal subunit protein uS11 (118 aa).

This sequence belongs to the universal ribosomal protein uS11 family. In terms of assembly, part of the 30S ribosomal subunit. Interacts with proteins S7 and S18. Binds to IF-3.

Functionally, located on the platform of the 30S subunit, it bridges several disparate RNA helices of the 16S rRNA. Forms part of the Shine-Dalgarno cleft in the 70S ribosome. The sequence is that of Small ribosomal subunit protein uS11 from Carsonella ruddii (strain PV).